A 113-amino-acid chain; its full sequence is MNRLDFVDQASLRDDIPAFSPGDTINVHVKVIEGAKERIQVFKGVVIRRQGGGIRETFTVRKESYGVGVERTFPVHSPNIDHIEVVTRGDVRRAKLYYLRELRGKKAKIKEKR.

The protein belongs to the bacterial ribosomal protein bL19 family.

This protein is located at the 30S-50S ribosomal subunit interface and may play a role in the structure and function of the aminoacyl-tRNA binding site. The protein is Large ribosomal subunit protein bL19 of Mycobacterium marinum (strain ATCC BAA-535 / M).